The sequence spans 86 residues: CLAVATA3/ESR (CLE)-related protein 8 (86 aa).

The first 24 residues, 1–24 (MKVLKRDSMLLLITLYFLLTTSMA), serve as a signal peptide directing secretion. The disordered stretch occupies residues 43–86 (DLKQNKAKPHLPNLFRTMRRVPTGPNPLHHISPPQPGSLNYARN). Residues Pro64 and Pro67 each carry the hydroxyproline modification. O-linked (Ara...) hydroxyproline glycosylation occurs at Pro67.

Belongs to the CLV3/ESR signal peptide family. In terms of processing, the O-glycosylation (arabinosylation) of the hydroxyproline Pro-67 enhances binding affinity of the CLE8p peptide for its receptor. Mostly expressed in siliques, and, to a lower extent, in flowers. Expressed in young embryos and endosperm.

The protein localises to the secreted. It localises to the extracellular space. In terms of biological role, extracellular signal peptide that regulates cell fate. Represses root apical meristem maintenance. Positively regulates the expression of the transcription factor WOX8 and thus, regulates early embryo development. Regulates the transition of protophloem cells from proliferation to differentiation, thus impinging on postembryonic growth capacity of the root meristem; this signaling pathway requires CRN and CLV2. The protein is CLAVATA3/ESR (CLE)-related protein 8 of Arabidopsis thaliana (Mouse-ear cress).